Consider the following 460-residue polypeptide: Beta-1,3-xylanase TXYA (460 aa).

Positions 1–22 (MKKLAKMISVATLGACAFQAHA) are cleaved as a signal peptide. The region spanning 23 to 337 (LDGKLVPDQG…LSDPKFIRHS (315 aa)) is the GH26 domain. Glutamate 138 functions as the Proton donor in the catalytic mechanism. The active-site Nucleophile is the glutamate 234. The disordered stretch occupies residues 347-371 (GNSDGGNGGDNGGDNGGDNGGETPE). The span at 348-366 (NSDGGNGGDNGGDNGGDNG) shows a compositional bias: gly residues. The interval 368 to 460 (ETPENCTDDF…TVTFTNQVCN (93 aa)) is carbohydrate binding module (CBM). 2 cysteine pairs are disulfide-bonded: cysteine 373-cysteine 459 and cysteine 404-cysteine 409.

Belongs to the glycosyl hydrolase 26 family.

It carries out the reaction Random hydrolysis of (1-&gt;3)-beta-D-glycosidic linkages in (1-&gt;3)-beta-D-xylans.. Its activity is regulated as follows. Completely inhibited by Cu(2+), Hg(2+) and N-bromosuccinimide. Strongly inhibited by Ag(+), Zn(2+) and Pb(2+). Moderately inhibited by Fe(3+), Al(3+), Mn(2+), dithiothreitol and p-chloromercuribenzoic acid. Slightly activated by Mg(2+) and Ca(2+). Unaffected by Na(+), K(+), Ba(2+), EDTA, iodoacetic acid and N-ethylmalaimide. Functionally, catalyzes the hydrolysis of beta-1,3-xylan into oligosaccharides, mainly xylotriose and xylobiose with smaller amounts of xylotetraose, xylose, xylopentaose and xylohexaose. Weakly active toward beta-1,3-xylotriose, yielding xylose and xylobiose. Converts beta-1,3-xylotetraose into xylotriose, xylobiose and xylose. Converts beta-1,3-xylopentaose into xylotetraose, xylotriose, xylobiose and xylose. Does not hydrolyze xylobiose, p-nitrophenyl-beta-xyloside, beta-1,4-xylan, curdlan or carboxymethylcellulose. In Vibrio sp, this protein is Beta-1,3-xylanase TXYA.